Consider the following 891-residue polypeptide: Valine--tRNA ligase (891 aa).

Positions 43–53 (PFTSGTLHLGH) match the 'HIGH' region motif. The 'KMSKS' region signature appears at 536 to 540 (KMSKS). An ATP-binding site is contributed by K539.

Belongs to the class-I aminoacyl-tRNA synthetase family. ValS type 2 subfamily.

Its subcellular location is the cytoplasm. The catalysed reaction is tRNA(Val) + L-valine + ATP = L-valyl-tRNA(Val) + AMP + diphosphate. Functionally, catalyzes the attachment of valine to tRNA(Val). As ValRS can inadvertently accommodate and process structurally similar amino acids such as threonine, to avoid such errors, it has a 'posttransfer' editing activity that hydrolyzes mischarged Thr-tRNA(Val) in a tRNA-dependent manner. The sequence is that of Valine--tRNA ligase from Pyrococcus horikoshii (strain ATCC 700860 / DSM 12428 / JCM 9974 / NBRC 100139 / OT-3).